The primary structure comprises 419 residues: NF-kappa-B essential modulator (419 aa).

Residues 1 to 197 are required for interaction with and ubiquitination by MARCHF2; the sequence is MNRHLWKSQL…REALQQQHSV (197 aa). Ser-31 and Ser-43 each carry phosphoserine; by IKKB. The interaction with CHUK/IKBKB stretch occupies residues 44–111; the sequence is EQGAPETLQR…KLVERLGLEK (68 aa). Residues 49-356 adopt a coiled-coil conformation; sequence ETLQRCLEEN…CQESARIEDM (308 aa). The residue at position 68 (Ser-68) is a Phosphoserine. The residue at position 85 (Ser-85) is a Phosphoserine; by ATM. Residues Lys-111, Lys-139, Lys-143, Lys-226, Lys-246, and Lys-264 each participate in a glycyl lysine isopeptide (Lys-Gly) (interchain with G-Cter in ubiquitin) cross-link. The segment at 150-257 is interaction with TANK; that stretch reads LGELQESQSR…SVVGSERKRG (108 aa). A ubiquitin-binding (UBAN) region spans residues 242-350; the sequence is DNHIKSSVVG…SKLKASCQES (109 aa). The segment at 246–365 is self-association; the sequence is KSSVVGSERK…MRKRHVEVSQ (120 aa). The required for interaction with TNFAIP3 stretch occupies residues 251–419; it reads GSERKRGMQL…LQIHVMECIE (169 aa). A Glycyl lysine isopeptide (Lys-Gly) (interchain with G-Cter in SUMO); alternate cross-link involves residue Lys-277. A Glycyl lysine isopeptide (Lys-Gly) (interchain with G-Cter in ubiquitin); alternate cross-link involves residue Lys-277. Residues Lys-283, Lys-285, Lys-292, and Lys-302 each participate in a glycyl lysine isopeptide (Lys-Gly) (interchain with G-Cter in ubiquitin) cross-link. Lys-309 is covalently cross-linked (Glycyl lysine isopeptide (Lys-Gly) (interchain with G-Cter in SUMO); alternate). Residue Lys-309 forms a Glycyl lysine isopeptide (Lys-Gly) (interchain with G-Cter in ubiquitin); alternate linkage. Residues Lys-321 and Lys-325 each participate in a glycyl lysine isopeptide (Lys-Gly) (interchain with G-Cter in ubiquitin) cross-link. The interval 322–343 is leucine-zipper; the sequence is LAEKKELLQEQLEQLQREYSKL. Residue Lys-326 forms a Glycyl lysine isopeptide (Lys-Gly) (interchain with G-Cter in ubiquitin and interchain with MARCHF2) linkage. The tract at residues 358 to 395 is disordered; sequence KRHVEVSQAPLPPAPAYLSSPLALPSQRRSPPEEPPDF. Residues 373–386 show a composition bias toward low complexity; the sequence is AYLSSPLALPSQRR. Ser-376 carries the phosphoserine; by IKKB modification. The segment at 382-419 is interaction with CYLD; sequence PSQRRSPPEEPPDFCCPKCQYQAPDMDTLQIHVMECIE. Ser-387 carries the post-translational modification Phosphoserine. A CCHC NOA-type zinc finger spans residues 389-419; the sequence is PEEPPDFCCPKCQYQAPDMDTLQIHVMECIE. Position 397 (Cys-397) interacts with Zn(2+). Lys-399 is covalently cross-linked (Glycyl lysine isopeptide (Lys-Gly) (interchain with G-Cter in ubiquitin)). Zn(2+) contacts are provided by Cys-400, His-413, and Cys-417.

As to quaternary structure, homodimer; disulfide-linked. Component of the I-kappa-B-kinase (IKK) core complex consisting of CHUK, IKBKB and IKBKG; probably four alpha/CHUK-beta/IKBKB dimers are associated with four gamma/IKBKG subunits. The IKK core complex seems to associate with regulatory or adapter proteins to form a IKK-signalosome holo-complex. The IKK complex associates with TERF2IP/RAP1, leading to promote IKK-mediated phosphorylation of RELA/p65. Part of a complex composed of NCOA2, NCOA3, CHUK/IKKA, IKBKB, IKBKG and CREBBP. Interacts with COPS3, CYLD, NALP2, TRPC4AP and PIDD1. Interacts with ATM; the complex is exported from the nucleus. Interacts with TRAF6. Interacts with IKBKE. Interacts with TANK; the interaction is enhanced by IKBKE and TBK1. Part of a ternary complex consisting of TANK, IKBKB and IKBKG. Interacts with ZFAND5. Interacts with RIPK2. Interacts with TNIP1 and TNFAIP3; TNIP1 facilitates the TNFAIP3-mediated de-ubiquitination of IKBKG. Interacts with TNFAIP3; the interaction is induced by TNF stimulation and by polyubiquitin. Binds (via UBAN region) polyubiquitin; binds both 'Lys-63'-linked and linear polyubiquitin, with higher affinity for linear ubiquitin. Interacts with NLRP10. Interacts with TANK; this interaction increases in response to DNA damage. Interacts with USP10; this interaction increases in response to DNA damage. Interacts with ZC3H12A; this interaction increases in response to DNA damage. Interacts with IFIT5; the interaction synergizes the recruitment of IKK to MAP3K7 and enhances IKK phosphorylation. Interacts with TRIM29; this interaction induces IKBKG/NEMO ubiquitination and proteolytic degradation. Interacts with TRIM13; this interaction leads to IKBKG/NEMO ubiquitination. Interacts with ARFIP2. Interacts with RIPK1. Interacts with (ubiquitinated) BCL10; interaction with polyubiquitinated BCL10 via both 'Lys-63'-linked and linear ubiquitin is required for TCR-induced NF-kappa-B activation. Interacts with MARCHF2; during the late stages of macrophage viral and bacterial infection; the interaction leads to ubiquitination and degradation of IKBKG/NEMO. (Microbial infection) Interacts with Molluscum contagiosum virus protein MC005; this interaction inhibits NF-kappa-B activation. In terms of assembly, (Microbial infection) Interacts with HTLV-1 Tax oncoprotein; the interaction activates IKBKG. As to quaternary structure, (Microbial infection) Interacts with Shigella flexneri ipah9.8; the interaction promotes TNIP1-dependent 'Lys-27'-linked polyubiquitination of IKBKG which perturbs NF-kappa-B activation during bacterial infection. (Microbial infection) Interacts with SARS coronavirus-2/SARS-CoV-2 virus protein ORF9B (via N-terminus); the interaction inhibits polyubiquitination through 'Lys-63' and NF-kappa-B activation. Phosphorylation at Ser-68 attenuates aminoterminal homodimerization. Post-translationally, polyubiquitinated on Lys-285 via 'Lys-63'-linked ubiquitin; the ubiquitination is mediated downstream of NOD2 and RIPK2 and probably plays a role in signaling by facilitating interactions with ubiquitin domain-containing proteins and activates the NF-kappa-B pathway. Polyubiquitinated on Lys-285 and Lys-399 through 'Lys-63'-linked ubiquitin; the ubiquitination is mediated by BCL10, MALT1 and TRAF6 and probably plays a role in signaling by facilitating interactions with ubiquitin domain-containing proteins and activates the NF-kappa-B pathway. Monoubiquitinated on Lys-277 and Lys-309; promotes nuclear export. Polyubiquitinated through 'Lys-27' by TRIM23; involved in antiviral innate and inflammatory responses. Linear polyubiquitinated on Lys-111, Lys-143, Lys-226, Lys-246, Lys-264, Lys-277, Lys-285, Lys-292, Lys-302, Lys-309 and Lys-326; the head-to-tail polyubiquitination is mediated by the LUBAC complex and plays a key role in NF-kappa-B activation. Deubiquitinated by USP10 in a TANK-dependent and -independent manner, leading to the negative regulation of NF-kappa-B signaling upon DNA damage. Ubiquitinated at Lys-326 by MARCHF2 following bacterial and viral infection which leads to its degradation. Polyubiquitinated via 'Lys-29'-linked ubiquitin; leading to lysosomal degradation. In terms of processing, sumoylated on Lys-277 and Lys-309 with SUMO1; the modification results in phosphorylation of Ser-85 by ATM leading to a replacement of the sumoylation by mono-ubiquitination on these residues. Neddylated by TRIM40, resulting in stabilization of NFKBIA and down-regulation of NF-kappa-B activity. Post-translationally, (Microbial infection) Cleaved by hepatitis A virus (HAV) protease 3C allowing the virus to disrupt the host innate immune signaling. In terms of processing, (Microbial infection) Deubiquitinated by Epstein-Barr virus BPLF1 on both 'Lys-48' and 'Lys-63'-linked ubiquitin chains; leading to NF-kappa-B signaling inhibition. (Microbial infection) Polyubiquitinated on Lys-309 and Lys-321 via 'Lys-27'-linked ubiquitin by Shigella flexneri E3 ubiquitin-protein ligase ipah9.8, leading to its degradation by the proteasome. Post-translationally, (Microbial infection) Polyubiquitination through 'Lys-63' is interrupted by interaction with SARS coronavirus-2/SARS-CoV-2 virus protein ORF9B which inhibits the NF-kappa-B pathway. In terms of tissue distribution, heart, brain, placenta, lung, liver, skeletal muscle, kidney and pancreas.

The protein localises to the cytoplasm. The protein resides in the nucleus. In terms of biological role, regulatory subunit of the IKK core complex which phosphorylates inhibitors of NF-kappa-B thus leading to the dissociation of the inhibitor/NF-kappa-B complex and ultimately the degradation of the inhibitor. Its binding to scaffolding polyubiquitin plays a key role in IKK activation by multiple signaling receptor pathways. Can recognize and bind both 'Lys-63'-linked and linear polyubiquitin upon cell stimulation, with a much higher affinity for linear polyubiquitin. Could be implicated in NF-kappa-B-mediated protection from cytokine toxicity. Essential for viral activation of IRF3. Involved in TLR3- and IFIH1-mediated antiviral innate response; this function requires 'Lys-27'-linked polyubiquitination. Its function is as follows. (Microbial infection) Also considered to be a mediator for HTLV-1 Tax oncoprotein activation of NF-kappa-B. The sequence is that of NF-kappa-B essential modulator from Homo sapiens (Human).